The chain runs to 256 residues: Probable ABC transporter ATP-binding protein spyM18_0273 (256 aa).

The ABC transporter domain maps to 4-246 (LEINNLHVSI…EKEGYAGIAQ (243 aa)). Residue 36 to 43 (GPNGTGKS) coordinates ATP.

Belongs to the ABC transporter superfamily. Ycf16 family.

The protein resides in the cell membrane. The protein is Probable ABC transporter ATP-binding protein spyM18_0273 of Streptococcus pyogenes serotype M18 (strain MGAS8232).